The chain runs to 337 residues: Homeobox protein knotted-1-like 4 (337 aa).

Disordered stretches follow at residues 1 to 56 (MEQQ…SFHE) and 159 to 190 (FTLD…GLPE). The span at 27–38 (PTSTSTSPAVPS) shows a compositional bias: low complexity. In terms of domain architecture, ELK spans 200 to 220 (ELKSHLLNKYSGYLSSLWREL). The homeobox; TALE-type DNA-binding region spans 221–284 (SKKKKKGKLP…NQRKRHWKPT (64 aa)).

Belongs to the TALE/KNOX homeobox family.

Its subcellular location is the nucleus. This chain is Homeobox protein knotted-1-like 4 (OSH10), found in Oryza sativa subsp. japonica (Rice).